The following is a 320-amino-acid chain: o-succinylbenzoate synthase (320 aa).

The active-site Proton donor is the Lys133. Asp161, Glu190, and Asp213 together coordinate Mg(2+). Lys235 acts as the Proton acceptor in catalysis.

This sequence belongs to the mandelate racemase/muconate lactonizing enzyme family. MenC type 1 subfamily. A divalent metal cation serves as cofactor.

The enzyme catalyses (1R,6R)-6-hydroxy-2-succinyl-cyclohexa-2,4-diene-1-carboxylate = 2-succinylbenzoate + H2O. Its pathway is quinol/quinone metabolism; 1,4-dihydroxy-2-naphthoate biosynthesis; 1,4-dihydroxy-2-naphthoate from chorismate: step 4/7. It participates in quinol/quinone metabolism; menaquinone biosynthesis. Functionally, converts 2-succinyl-6-hydroxy-2,4-cyclohexadiene-1-carboxylate (SHCHC) to 2-succinylbenzoate (OSB). The sequence is that of o-succinylbenzoate synthase from Salmonella heidelberg (strain SL476).